We begin with the raw amino-acid sequence, 326 residues long: Endo-beta-1,4-glucanase A (326 aa).

An N-terminal signal peptide occupies residues 1 to 19 (MRSLVLLSSVLALVAPSKG). Glu150 serves as the catalytic Proton donor. Glu257 (nucleophile) is an active-site residue.

Belongs to the glycosyl hydrolase 5 (cellulase A) family.

The protein resides in the secreted. It catalyses the reaction Endohydrolysis of (1-&gt;4)-beta-D-glucosidic linkages in cellulose, lichenin and cereal beta-D-glucans.. In terms of biological role, has endoglucanase activity on substrates containing beta-1,4 glycosidic bonds, like in carboxymethylcellulose (CMC), hydroxyethylcellulose (HEC) and beta-glucan. Involved in the degradation of complex natural cellulosic substrates. In Emericella nidulans (strain FGSC A4 / ATCC 38163 / CBS 112.46 / NRRL 194 / M139) (Aspergillus nidulans), this protein is Endo-beta-1,4-glucanase A (eglA).